Reading from the N-terminus, the 1380-residue chain is DNA-directed RNA polymerase subunit beta (1380 aa).

The protein belongs to the RNA polymerase beta chain family. The RNAP catalytic core consists of 2 alpha, 1 beta, 1 beta' and 1 omega subunit. When a sigma factor is associated with the core the holoenzyme is formed, which can initiate transcription.

It catalyses the reaction RNA(n) + a ribonucleoside 5'-triphosphate = RNA(n+1) + diphosphate. Its function is as follows. DNA-dependent RNA polymerase catalyzes the transcription of DNA into RNA using the four ribonucleoside triphosphates as substrates. In Ehrlichia ruminantium (strain Gardel), this protein is DNA-directed RNA polymerase subunit beta.